The chain runs to 396 residues: S-arrestin (396 aa).

This sequence belongs to the arrestin family.

Arrestin is one of the major proteins of the ros (retinal rod outer segments); it binds to photoactivated-phosphorylated rhodopsin, thereby apparently preventing the transducin-mediated activation of phosphodiesterase. This Aquarana catesbeiana (American bullfrog) protein is S-arrestin.